The sequence spans 633 residues: Chaperone protein HtpG (633 aa).

An a; substrate-binding region spans residues 1–341 (MTAPHETMSF…SADLPLNVSR (341 aa)). Residues 342–562 (ELLQESRDVK…EGDMSGYLQR (221 aa)) are b. Positions 563–633 (LLKQAGQKAP…YVQRVNKLLA (71 aa)) are c.

It belongs to the heat shock protein 90 family. Homodimer.

The protein localises to the cytoplasm. Its function is as follows. Molecular chaperone. Has ATPase activity. The protein is Chaperone protein HtpG of Cupriavidus necator (strain ATCC 17699 / DSM 428 / KCTC 22496 / NCIMB 10442 / H16 / Stanier 337) (Ralstonia eutropha).